The primary structure comprises 78 residues: MKEFLAYIVKNLVDRPEEVHLKEVQGTNTIIYELTVAKGDIGKIIGKEGRTIKAIRTLLVSVASRDNVKVSLEIMEER.

The 50-residue stretch at 29 to 78 (TIIYELTVAKGDIGKIIGKEGRTIKAIRTLLVSVASRDNVKVSLEIMEER) folds into the KH domain.

Belongs to the KhpA RNA-binding protein family.

The protein resides in the cytoplasm. Functionally, a probable RNA-binding protein. This chain is RNA-binding protein KhpA, found in Chlamydia muridarum (strain MoPn / Nigg).